Consider the following 475-residue polypeptide: Methyltransferase-like protein 25B (475 aa).

A coiled-coil region spans residues 185 to 210; the sequence is NKRLVARAQRLDQELLQALDKMEKRH. A helical membrane pass occupies residues 406–426; it reads VVAFFSLALLLAPLVETLILL.

Belongs to the METTL25 family.

The protein resides in the membrane. This chain is Methyltransferase-like protein 25B, found in Rattus norvegicus (Rat).